A 424-amino-acid chain; its full sequence is Steryl acetyl hydrolase 1 (424 aa).

Residue A2 is modified to N-acetylalanine. At 2–45 the chain is on the cytoplasmic side; that stretch reads AANSGLDSKVEYYRLQENEIISAVSSEDADQNDAGFRLSTIHLH. A helical; Signal-anchor for type II membrane protein transmembrane segment spans residues 46 to 66; sequence LFHGLKFAALLFTVVPVFIIL. Residues 67–424 are Lumenal-facing; sequence DSMKIIFQRK…IARILEFMQS (358 aa). The N-linked (GlcNAc...) asparagine glycan is linked to N85. Residues 176 to 178 carry the Involved in the stabilization of the negatively charged intermediate by the formation of the oxyanion hole motif; it reads HGG. S250 is an active-site residue. The N-linked (GlcNAc...) asparagine glycan is linked to N283. H395 is an active-site residue. An N-linked (GlcNAc...) asparagine glycan is attached at N401.

The protein belongs to the 'GDXG' lipolytic enzyme family.

Its subcellular location is the endoplasmic reticulum membrane. Functionally, required for the deacetylation of acetylated sterols. Involved in the resistance to eugenol and pregnenolone toxicity. The protein is Steryl acetyl hydrolase 1 (SAY1) of Saccharomyces cerevisiae (strain ATCC 204508 / S288c) (Baker's yeast).